Reading from the N-terminus, the 316-residue chain is Pantothenate kinase (316 aa).

95–102 (GSVAVGKS) lines the ATP pocket.

Belongs to the prokaryotic pantothenate kinase family.

Its subcellular location is the cytoplasm. The enzyme catalyses (R)-pantothenate + ATP = (R)-4'-phosphopantothenate + ADP + H(+). The protein operates within cofactor biosynthesis; coenzyme A biosynthesis; CoA from (R)-pantothenate: step 1/5. The protein is Pantothenate kinase of Shigella sonnei (strain Ss046).